Reading from the N-terminus, the 100-residue chain is Urease subunit gamma (100 aa).

This sequence belongs to the urease gamma subunit family. Heterotrimer of UreA (gamma), UreB (beta) and UreC (alpha) subunits. Three heterotrimers associate to form the active enzyme.

It is found in the cytoplasm. The enzyme catalyses urea + 2 H2O + H(+) = hydrogencarbonate + 2 NH4(+). Its pathway is nitrogen metabolism; urea degradation; CO(2) and NH(3) from urea (urease route): step 1/1. The chain is Urease subunit gamma from Cyanothece sp. (strain PCC 7425 / ATCC 29141).